Here is a 414-residue protein sequence, read N- to C-terminus: Transposon Ty4-J Gag polyprotein (414 aa).

Positions 39–115 (RKVSIKDEQV…IQLLETNENN (77 aa)) form a coiled coil. A disordered region spans residues 378 to 414 (GAQRQQPLKSSAKRTKVLEQDTKKVEQSVQQQKTGNY). Over residues 393–403 (KVLEQDTKKVE) the composition is skewed to basic and acidic residues. Positions 404-414 (QSVQQQKTGNY) are enriched in polar residues.

In terms of biological role, capsid protein (CA) is the structural component of the virus-like particle (VLP), forming the shell that encapsulates the retrotransposons dimeric RNA genome. This chain is Transposon Ty4-J Gag polyprotein (TY4A-J), found in Saccharomyces cerevisiae (strain ATCC 204508 / S288c) (Baker's yeast).